Consider the following 252-residue polypeptide: MTVMDLNSDVGEPFGAWGMGDDAAVFRSVSSANVACGFHAGDPSVMAQTCRDAVAAGVTVGAHVAYRDLAGFGRRFLDCSPTELADDVLYQMGALEAVARAAGTTVRYVKPHGALYNTIVHHEAHAQAVVNAVKAFGGDLPLLLLPGSAALRAAEKAGLRAVPEAFADRGYTPEGTLVSRRDPGAVLHDAAQVTERMVRLAEDGTLTAVDGSTVRIHAESICVHGDTPGAAAMAAEVRAGLDRAGITVRSFA.

The protein belongs to the LamB/PxpA family. As to quaternary structure, forms a complex composed of PxpA, PxpB and PxpC.

It catalyses the reaction 5-oxo-L-proline + ATP + 2 H2O = L-glutamate + ADP + phosphate + H(+). Its function is as follows. Catalyzes the cleavage of 5-oxoproline to form L-glutamate coupled to the hydrolysis of ATP to ADP and inorganic phosphate. The polypeptide is 5-oxoprolinase subunit A (Kocuria rhizophila (strain ATCC 9341 / DSM 348 / NBRC 103217 / DC2201)).